Here is a 391-residue protein sequence, read N- to C-terminus: Phosphoglycerate kinase (391 aa).

Substrate is bound by residues 21–23 (DLN), arginine 36, 59–62 (HLGR), arginine 113, and arginine 146. ATP contacts are provided by residues lysine 197, glutamate 319, and 345–348 (GGDT).

The protein belongs to the phosphoglycerate kinase family. As to quaternary structure, monomer.

It localises to the cytoplasm. It carries out the reaction (2R)-3-phosphoglycerate + ATP = (2R)-3-phospho-glyceroyl phosphate + ADP. Its pathway is carbohydrate degradation; glycolysis; pyruvate from D-glyceraldehyde 3-phosphate: step 2/5. The polypeptide is Phosphoglycerate kinase (Shewanella woodyi (strain ATCC 51908 / MS32)).